The sequence spans 237 residues: IVGGTDAVLGEFPYQLSFQETFLGFSFHFCGASIYNENYAITAGHCVYGDDYENPSGLQIVAGELDMSVNEGSEQTITVSKIILHENFDYDLLDNDISLLKLSGSLTFNNNVAPIALPAQGHTATGNVIVTGWGTTSEGGNTPDVLQKVTVPLVSDAECRDDYGADEIFDSMICAGVPEGGKDSCQGDSGGPLAASDTGSTYLAGIVSWGYGCARPGYPGVYTEVSYHVDWIKANAV.

One can recognise a Peptidase S1 domain in the interval 1 to 237 (IVGGTDAVLG…HVDWIKANAV (237 aa)). An intrachain disulfide couples C30 to C46. The Charge relay system role is filled by H45. Residues E64, V69, and E74 each contribute to the Ca(2+) site. D96 serves as the catalytic Charge relay system. Cystine bridges form between C159-C174 and C185-C213. The active-site Charge relay system is the S189.

It belongs to the peptidase S1 family. It depends on Ca(2+) as a cofactor.

The protein resides in the secreted. It localises to the extracellular space. The enzyme catalyses Preferential cleavage: Arg-|-Xaa, Lys-|-Xaa.. This is Trypsin-1 from Astacus astacus (Noble crayfish).